Reading from the N-terminus, the 257-residue chain is uncharacterized protein (257 aa).

Residues 6 to 26 (IFWLNLAAIIIISIVVSGGMF) form a helical membrane-spanning segment.

This sequence belongs to the staphylococcal tandem lipoprotein family.

It is found in the cell membrane. This is an uncharacterized protein from Staphylococcus aureus (strain Mu50 / ATCC 700699).